We begin with the raw amino-acid sequence, 312 residues long: Sulfate adenylyltransferase subunit 2 (312 aa).

The protein belongs to the PAPS reductase family. CysD subfamily. As to quaternary structure, heterodimer composed of CysD, the smaller subunit, and CysN.

The enzyme catalyses sulfate + ATP + H(+) = adenosine 5'-phosphosulfate + diphosphate. Its pathway is sulfur metabolism; hydrogen sulfide biosynthesis; sulfite from sulfate: step 1/3. In terms of biological role, with CysN forms the ATP sulfurylase (ATPS) that catalyzes the adenylation of sulfate producing adenosine 5'-phosphosulfate (APS) and diphosphate, the first enzymatic step in sulfur assimilation pathway. APS synthesis involves the formation of a high-energy phosphoric-sulfuric acid anhydride bond driven by GTP hydrolysis by CysN coupled to ATP hydrolysis by CysD. This is Sulfate adenylyltransferase subunit 2 from Methylobacterium nodulans (strain LMG 21967 / CNCM I-2342 / ORS 2060).